We begin with the raw amino-acid sequence, 228 residues long: MQKLKQQVFEANMELPRYGLVTFTWGNVSAIDRERGLVVIKPSGVAYETMKAADMVVVDMSGKVVEGEYRPSSDTATHLELYRRYPSLGGIVHTHSTHATAWAQAGLAIPALGTTHADYFFGDIPCTRGLSEEEVQGEYELNTGKVIIETLGNAEPLHTPGIVVYQHGPFAWGKDAHDAVHNAVVMEEVAKMAWIARGINPQLNHIDSFLMNKHFMRKHGPNAYYGQK.

Residues Gly-26–Asn-27, Ser-43–Gly-44, and Ser-72–Ser-73 contribute to the substrate site. Residues Asp-74, His-93, and His-95 each contribute to the Zn(2+) site. Asp-118 (proton donor/acceptor) is an active-site residue. His-167 serves as a coordination point for Zn(2+). Tyr-225 functions as the Proton donor/acceptor in the catalytic mechanism.

This sequence belongs to the aldolase class II family. AraD/FucA subfamily. The cofactor is Zn(2+).

It carries out the reaction L-ribulose 5-phosphate = D-xylulose 5-phosphate. Its pathway is cofactor degradation; L-ascorbate degradation; D-xylulose 5-phosphate from L-ascorbate: step 4/4. In terms of biological role, catalyzes the isomerization of L-ribulose 5-phosphate to D-xylulose 5-phosphate. Is involved in the anaerobic L-ascorbate utilization. The polypeptide is L-ribulose-5-phosphate 4-epimerase UlaF (Escherichia coli (strain K12 / MC4100 / BW2952)).